Here is a 432-residue protein sequence, read N- to C-terminus: Glutamyl-tRNA reductase (432 aa).

Substrate is bound by residues 55-58 (TCNR), Ser114, 119-121 (ETQ), and Gln125. The active-site Nucleophile is Cys56. NADP(+) is bound at residue 194–199 (GAGEMI).

This sequence belongs to the glutamyl-tRNA reductase family. As to quaternary structure, homodimer.

It catalyses the reaction (S)-4-amino-5-oxopentanoate + tRNA(Glu) + NADP(+) = L-glutamyl-tRNA(Glu) + NADPH + H(+). Its pathway is porphyrin-containing compound metabolism; protoporphyrin-IX biosynthesis; 5-aminolevulinate from L-glutamyl-tRNA(Glu): step 1/2. Functionally, catalyzes the NADPH-dependent reduction of glutamyl-tRNA(Glu) to glutamate 1-semialdehyde (GSA). The protein is Glutamyl-tRNA reductase of Burkholderia ambifaria (strain ATCC BAA-244 / DSM 16087 / CCUG 44356 / LMG 19182 / AMMD) (Burkholderia cepacia (strain AMMD)).